The primary structure comprises 835 residues: Toll-like receptor 4 (835 aa).

The signal sequence occupies residues 1–25; it reads MMPLLHLAGTLIMALFLSCLRPGSL. Residues 26-638 are Extracellular-facing; the sequence is NPCIEVLPNI…KTIISVSVVS (613 aa). An intrachain disulfide couples cysteine 28 to cysteine 39. Residues asparagine 34, asparagine 43, and asparagine 75 are each glycosylated (N-linked (GlcNAc...) asparagine). LRR repeat units follow at residues 54 to 75, 78 to 99, 102 to 123, 126 to 147, and 150 to 171; these read STKN…SFTN, QLQW…AWHG, QLST…SFSG, NLEN…HIGQ, and SLKK…EYFS. Asparagine 172 carries an N-linked (GlcNAc...) asparagine glycan. 3 LRR repeats span residues 175–198, 204–224, and 226–247; these read NLEH…QFLR, NLSL…AFQG, and RLHE…MCLQ. Asparagine 204, asparagine 237, asparagine 248, asparagine 281, and asparagine 307 each carry an N-linked (GlcNAc...) asparagine glycan. A disulfide bond links cysteine 280 and cysteine 304. An LRR 9 repeat occupies 372–381; the sequence is SLRYLDLSRN. Cysteines 388 and 389 form a disulfide. LRR repeat units follow at residues 398 to 420, 421 to 442, 446 to 467, and 470 to 491; these read NLKY…MGLE, ELEY…SVFL, KLLY…IFLG, and SLNT…NVFT. 3 N-linked (GlcNAc...) asparagine glycosylation sites follow: asparagine 492, asparagine 495, and asparagine 524. 3 LRR repeats span residues 495–516, 519–540, and 543–564; these read NLTF…VFDT, RLQL…HYKQ, and SLRT…LQHF. Residues asparagine 572 and asparagine 575 are each glycosylated (N-linked (GlcNAc...) asparagine). One can recognise an LRRCT domain in the interval 576 to 627; sequence NSVACICEYQNFLQWVKDQKMFLVNVEQMKCASPIDMKASLVLDFTNSTCYI. 2 disulfide bridges follow: cysteine 580/cysteine 606 and cysteine 582/cysteine 625. A glycan (N-linked (GlcNAc...) asparagine) is linked at asparagine 622. A helical transmembrane segment spans residues 639–659; that stretch reads VLVVATVAFLIYHFYFHLILI. Residues 660-835 lie on the Cytoplasmic side of the membrane; sequence AGCKKYSRGE…EEEQEATTLT (176 aa). A TIR domain is found at 670-813; it reads SIYDAFVIYS…IFWRRLKKAL (144 aa).

This sequence belongs to the Toll-like receptor family. As to quaternary structure, belongs to the lipopolysaccharide (LPS) receptor, a multi-protein complex containing at least CD14, LY96 and TLR4. Binding to bacterial LPS leads to homodimerization. Interacts with LY96 via the extracellular domain. Interacts with MYD88 and TIRAP via their respective TIR domains. Interacts with TICAM2. Interacts with NOX4. Interacts with CNPY3 and HSP90B1; this interaction is required for proper folding in the endoplasmic reticulum. Interacts with MAP3K21; this interaction leads to negative regulation of TLR4 signaling. Interacts with CD36, following CD36 stimulation by oxLDL or amyloid-beta 42, and forms a heterodimer with TLR6. The trimeric complex is internalized and triggers inflammatory response. LYN kinase activity facilitates TLR4-TLR6 heterodimerization and signal initiation. Interacts with TICAM1 in response to LPS in a WDFY1-dependent manner. Interacts with WDFY1 in response to LPS. Interacts with SMPDL3B. Interacts with CEACAM1; upon lipopolysaccharide stimulation, forms a complex including TLR4 and the phosphorylated form of SYK and CEACAM1, which in turn, recruits PTPN6 that dephosphorylates SYK, reducing the production of reactive oxygen species (ROS) and lysosome disruption, which in turn, reduces the activity of the inflammasome. Interacts with RFTN1; the interaction occurs in response to lipopolysaccharide stimulation. Interacts with SCIMP; the interaction occurs in response to lipopolysaccharide stimulation and is enhanced by phosphorylation of SCIMP by LYN. This interaction facilitates the phosphorylation of TLR4 by LYN which elicits a selective cytokine response in macrophages. Interacts with TRAF3IP3. Interacts with TREM1; this interaction enhances TLR4-mediated inflammatory response. Interacts with ZG16B/PAUF. Interacts with CD82; this interaction inhibits TLR4-mediated signaling pathway. Post-translationally, phosphorylated on tyrosine residues by LYN after binding lipopolysaccharide. In terms of processing, ubiquitinated by RNF128 via 'Lys-28'-linked polyubiquitin chains, leading to proteasomal degradation.

It is found in the cell membrane. It localises to the early endosome. The protein localises to the cell projection. Its subcellular location is the ruffle. Functionally, transmembrane receptor that functions as a pattern recognition receptor recognizing pathogen- and damage-associated molecular patterns (PAMPs and DAMPs) to induce innate immune responses via downstream signaling pathways. At the plasma membrane, cooperates with LY96 to mediate the innate immune response to bacterial lipopolysaccharide (LPS). Also involved in LPS-independent inflammatory responses triggered by free fatty acids, such as palmitate, and Ni(2+). Mechanistically, acts via MYD88, TIRAP and TRAF6, leading to NF-kappa-B activation, cytokine secretion and the inflammatory response. Alternatively, CD14-mediated TLR4 internalization via endocytosis is associated with the initiation of a MYD88-independent signaling via the TICAM1-TBK1-IRF3 axis leading to type I interferon production. In addition to the secretion of proinflammatory cytokines, initiates the activation of NLRP3 inflammasome and formation of a positive feedback loop between autophagy and NF-kappa-B signaling cascade. In complex with TLR6, promotes inflammation in monocytes/macrophages by associating with TLR6 and the receptor CD86. Upon ligand binding, such as oxLDL or amyloid-beta 42, the TLR4:TLR6 complex is internalized and triggers inflammatory response, leading to NF-kappa-B-dependent production of CXCL1, CXCL2 and CCL9 cytokines, via MYD88 signaling pathway, and CCL5 cytokine, via TICAM1 signaling pathway. In myeloid dendritic cells, vesicular stomatitis virus glycoprotein G but not LPS promotes the activation of IRF7, leading to type I IFN production in a CD14-dependent manner. In Rattus norvegicus (Rat), this protein is Toll-like receptor 4 (Tlr4).